Reading from the N-terminus, the 485-residue chain is Eukaryotic translation initiation factor 3 subunit E (485 aa).

A PCI domain is found at 219-391 (NQPDGPDGIV…GEIHITKPVT (173 aa)). Positions 444-485 (QGGGKSNKKGDYKKGDYKKGGDFKKGGDFKKGGDHKKRAWVK) are disordered. Positions 451–475 (KKGDYKKGDYKKGGDFKKGGDFKKG) are enriched in basic and acidic residues. The segment covering 476-485 (GDHKKRAWVK) has biased composition (basic residues).

It belongs to the eIF-3 subunit E family. As to quaternary structure, component of the eukaryotic translation initiation factor 3 (eIF-3) complex.

The protein resides in the cytoplasm. Component of the eukaryotic translation initiation factor 3 (eIF-3) complex, which is involved in protein synthesis of a specialized repertoire of mRNAs and, together with other initiation factors, stimulates binding of mRNA and methionyl-tRNAi to the 40S ribosome. The eIF-3 complex specifically targets and initiates translation of a subset of mRNAs involved in cell proliferation. The chain is Eukaryotic translation initiation factor 3 subunit E from Monosiga brevicollis (Choanoflagellate).